A 165-amino-acid polypeptide reads, in one-letter code: MVPAYIPNPVAALCGGGTPIDFCRNYTDGRRILGNGKTYRGLICGVLAGVLIGLVQIWLVGTYHWDLPRQTILSVTLLALGALLGDMGKSFIKRRLGKERGEAWPVADQYDLVVGAFLLTIIFDPAWFFAVVTLPVLIAILVITPVLHRSVNILGYWIKVKKEPW.

A run of 4 helical transmembrane segments spans residues 41–61, 72–92, 103–123, and 127–147; these read GLICGVLAGVLIGLVQIWLVG, ILSVTLLALGALLGDMGKSFI, AWPVADQYDLVVGAFLLTIIF, and WFFAVVTLPVLIAILVITPVL.

The protein belongs to the CDP-archaeol synthase family. Requires Mg(2+) as cofactor.

It localises to the cell membrane. The enzyme catalyses 2,3-bis-O-(geranylgeranyl)-sn-glycerol 1-phosphate + CTP + H(+) = CDP-2,3-bis-O-(geranylgeranyl)-sn-glycerol + diphosphate. It functions in the pathway membrane lipid metabolism; glycerophospholipid metabolism. Functionally, catalyzes the formation of CDP-2,3-bis-(O-geranylgeranyl)-sn-glycerol (CDP-archaeol) from 2,3-bis-(O-geranylgeranyl)-sn-glycerol 1-phosphate (DGGGP) and CTP. This reaction is the third ether-bond-formation step in the biosynthesis of archaeal membrane lipids. This Methanoregula boonei (strain DSM 21154 / JCM 14090 / 6A8) protein is CDP-archaeol synthase.